Reading from the N-terminus, the 116-residue chain is Small ribosomal subunit protein uS13 (116 aa).

The tract at residues 88–116 (GSRHKKGLPVRGQHTKNNARTRKGPRKQA) is disordered.

The protein belongs to the universal ribosomal protein uS13 family. Part of the 30S ribosomal subunit. Forms a loose heterodimer with protein S19. Forms two bridges to the 50S subunit in the 70S ribosome.

Its function is as follows. Located at the top of the head of the 30S subunit, it contacts several helices of the 16S rRNA. In the 70S ribosome it contacts the 23S rRNA (bridge B1a) and protein L5 of the 50S subunit (bridge B1b), connecting the 2 subunits; these bridges are implicated in subunit movement. Contacts the tRNAs in the A and P-sites. The chain is Small ribosomal subunit protein uS13 from Finegoldia magna (strain ATCC 29328 / DSM 20472 / WAL 2508) (Peptostreptococcus magnus).